Consider the following 270-residue polypeptide: Decarboxylase NovR (270 aa).

Belongs to the aldolase class II family.

It functions in the pathway antibiotic biosynthesis; novobiocin biosynthesis. Its function is as follows. May mediate the 2 consecutive oxidative decarboxylation steps in the biosynthesis of the prenylated hydroxybenzoic acid moiety of novobiocin, an aminocoumarin family antibiotic that targets bacterial DNA gyrases. This Streptomyces niveus (Streptomyces spheroides) protein is Decarboxylase NovR (novR).